The sequence spans 440 residues: tRNA(Ile)-lysidine synthase (440 aa).

ATP is bound at residue 29-34 (SGGLDS).

This sequence belongs to the tRNA(Ile)-lysidine synthase family.

The protein resides in the cytoplasm. It carries out the reaction cytidine(34) in tRNA(Ile2) + L-lysine + ATP = lysidine(34) in tRNA(Ile2) + AMP + diphosphate + H(+). Ligates lysine onto the cytidine present at position 34 of the AUA codon-specific tRNA(Ile) that contains the anticodon CAU, in an ATP-dependent manner. Cytidine is converted to lysidine, thus changing the amino acid specificity of the tRNA from methionine to isoleucine. The chain is tRNA(Ile)-lysidine synthase from Pectobacterium atrosepticum (strain SCRI 1043 / ATCC BAA-672) (Erwinia carotovora subsp. atroseptica).